The primary structure comprises 292 residues: Protease HtpX (292 aa).

Helical transmembrane passes span 5-25 (IFLFLLTNVAVLMLAGVVMSV) and 34-54 (SGLLVMAAIFGFGGSFISLLL). Residue His140 participates in Zn(2+) binding. The active site involves Glu141. Residue His144 coordinates Zn(2+). 2 helical membrane-spanning segments follow: residues 155 to 175 (LLQGVLNTFVIVLARVVGGII) and 193 to 213 (IIVFALEMVFGMFATMIAMWF). Glu218 is a Zn(2+) binding site.

The protein belongs to the peptidase M48B family. Zn(2+) serves as cofactor.

The protein localises to the cell inner membrane. The polypeptide is Protease HtpX (Xanthomonas oryzae pv. oryzae (strain PXO99A)).